A 357-amino-acid polypeptide reads, in one-letter code: MSDTTSLNVPELESPPIERVELESLLVMNIIKHCRDSFPNMGTIGQLVGIDIDGVLQVSSSFESPSVLENEESAVNKSVSGKARQAHTEAMLNRLQYIGAVTGHVGWYLGAYVSSFLSSPFFVETQYAYQKANPNSIAFLYDLSQSSNGTLYMRAYQLTPEFMAAHEEKTWTASSLNSHNLTPSNVIRELPIVIHNSHLATCLLHSLSEPPTPASTLTAEAALEDCESNLPLTETFSNFEVSLGTRYRKNIELLLESTDEFHYEQGNLGFHQRQLAREQAKIQQWIAKRKAENANRAAENLQPLPLDDWKRIFKLPAEPRLLDSLLISSQIMKSTQIDEQSSAFLSKLAGVRNAYAS.

Positions 20–162 (VELESLLVMN…MRAYQLTPEF (143 aa)) constitute an MPN domain.

Belongs to the eIF-3 subunit H family. Component of the eukaryotic translation initiation factor 3 (eIF-3) complex. The eIF-3 complex appears to include tif32/eif3a, SPAC25G10.08/eif3b, tif33/eif3c, SPBC4C3.07/eif3f, tif35/eif3g and sum1/eif3i. This set of common subunits may also associate exclusively with either moe1/eif3d and int6/eif3e, or with SPAC821.05/eif3h and SPAC1751.03/eif3m. The eIF-3 complex may also include SPAC3A12.13c/eif3j.

Its subcellular location is the cytoplasm. It localises to the nucleus. Its function is as follows. Component of the eukaryotic translation initiation factor 3 (eIF-3) complex, which is involved in protein synthesis of a specialized repertoire of mRNAs and, together with other initiation factors, stimulates binding of mRNA and methionyl-tRNAi to the 40S ribosome. The eIF-3 complex specifically targets and initiates translation of a subset of mRNAs involved in cell proliferation. This chain is Eukaryotic translation initiation factor 3 subunit H (eif3h), found in Schizosaccharomyces pombe (strain 972 / ATCC 24843) (Fission yeast).